The following is a 183-amino-acid chain: Intraflagellar transport protein 27 homolog (183 aa).

GTP is bound by residues 12-19, 63-67, and 120-123; these read GAPTVGKT, DVSGQ, and NKSD.

This sequence belongs to the small GTPase superfamily. Rab family. Component of the IFT complex B.

The protein localises to the cell projection. The protein resides in the cilium. It is found in the flagellum. Small GTPase-like component of the intraflagellar transport (IFT) complex B required for both anterograde and retrograde intraflagellar transport. May be involved in cargo loading of the retrograde transport. The polypeptide is Intraflagellar transport protein 27 homolog (Trypanosoma brucei brucei (strain 927/4 GUTat10.1)).